A 130-amino-acid chain; its full sequence is Small ribosomal subunit protein uS11 (130 aa).

It belongs to the universal ribosomal protein uS11 family. As to quaternary structure, part of the 30S ribosomal subunit. Interacts with proteins S7 and S18. Binds to IF-3.

Its function is as follows. Located on the platform of the 30S subunit, it bridges several disparate RNA helices of the 16S rRNA. Forms part of the Shine-Dalgarno cleft in the 70S ribosome. This chain is Small ribosomal subunit protein uS11, found in Prochlorococcus marinus (strain NATL1A).